A 134-amino-acid chain; its full sequence is Arsenate reductase (134 aa).

Residues Cys11, Cys83, and Cys90 each act as nucleophile in the active site. 2 cysteine pairs are disulfide-bonded: Cys11–Cys83 and Cys83–Cys90.

It belongs to the low molecular weight phosphotyrosine protein phosphatase family. Thioredoxin-coupled ArsC subfamily.

It is found in the cytoplasm. The catalysed reaction is arsenate + [thioredoxin]-dithiol + H(+) = arsenite + [thioredoxin]-disulfide + H2O. Its function is as follows. Catalyzes the reduction of arsenate [As(V)] to arsenite [As(III)]. This chain is Arsenate reductase, found in Bacillus anthracis (strain A0248).